A 434-amino-acid polypeptide reads, in one-letter code: Mannose-6-phosphate isomerase (434 aa).

Gln-109, His-111, and Glu-136 together coordinate Zn(2+). Polar residues predominate over residues 181–191; sequence SLGLPTSQPPD. Residues 181–200 form a disordered region; the sequence is SLGLPTSQPPDTSLFKPTES. His-291 is a Zn(2+) binding site. Arg-310 is a catalytic residue.

It belongs to the mannose-6-phosphate isomerase type 1 family. Zn(2+) serves as cofactor.

The protein localises to the cytoplasm. The catalysed reaction is D-mannose 6-phosphate = D-fructose 6-phosphate. It participates in nucleotide-sugar biosynthesis; GDP-alpha-D-mannose biosynthesis; alpha-D-mannose 1-phosphate from D-fructose 6-phosphate: step 1/2. Involved in the synthesis of the GDP-mannose and dolichol-phosphate-mannose required for a number of critical mannosyl transfer reactions. The chain is Mannose-6-phosphate isomerase (MAN1) from Cryptococcus neoformans var. neoformans serotype D (strain JEC21 / ATCC MYA-565) (Filobasidiella neoformans).